A 288-amino-acid polypeptide reads, in one-letter code: Histone H3-like centromeric protein hcp-3 (288 aa).

A disordered region spans residues 96–194 (YHARKEQARR…VTKTRRYRPG (99 aa)). The segment covering 178–193 (MRAGRNRVTKTRRYRP) has biased composition (basic residues). Positions 191-288 (YRPGQKALEE…LYRRLCLRHL (98 aa)) are H3-like.

This sequence belongs to the histone H3 family. In terms of assembly, forms a nucleosome-like histone octamer containing two molecules each of H2A, H2B, hcp-3 and H4 assembled in one hcp-3-H4 heterotetramer and two H2A-H2B heterodimers. The hcp-3-H4 heterotetramer is more compact and structurally more rigid than corresponding H3-H4 heterotetramers. Interacts with knl-2. Interacts with lin-53.

It localises to the nucleus. The protein localises to the chromosome. The protein resides in the centromere. It is found in the kinetochore. In terms of biological role, histone H3-like variant which exclusively replaces conventional H3 in the nucleosome core of centromeric chromatin at the inner plate of the kinetochore. Required for recruitment and assembly of kinetochore proteins, mitotic progression and chromosome segregation. May serve as an epigenetic mark that propagates centromere identity through replication and cell division. Might promote cleavage furrow stability during cytokinesis. Not required for chromosome segregation during meiosis. The polypeptide is Histone H3-like centromeric protein hcp-3 (Caenorhabditis elegans).